The following is a 357-amino-acid chain: Chorismate synthase (357 aa).

NADP(+) is bound by residues Arg-48 and Arg-54. Residues Arg-125 to Ser-127, Asn-238 to Ala-239, Gly-278, Lys-293 to Ser-297, and Arg-319 each bind FMN.

This sequence belongs to the chorismate synthase family. As to quaternary structure, homotetramer. FMNH2 is required as a cofactor.

The enzyme catalyses 5-O-(1-carboxyvinyl)-3-phosphoshikimate = chorismate + phosphate. It participates in metabolic intermediate biosynthesis; chorismate biosynthesis; chorismate from D-erythrose 4-phosphate and phosphoenolpyruvate: step 7/7. Its function is as follows. Catalyzes the anti-1,4-elimination of the C-3 phosphate and the C-6 proR hydrogen from 5-enolpyruvylshikimate-3-phosphate (EPSP) to yield chorismate, which is the branch point compound that serves as the starting substrate for the three terminal pathways of aromatic amino acid biosynthesis. This reaction introduces a second double bond into the aromatic ring system. The polypeptide is Chorismate synthase (Blochmanniella floridana).